Here is a 489-residue protein sequence, read N- to C-terminus: Probable anthranilate synthase component 1 (489 aa).

Residues Ser-54 and 262 to 264 each bind L-tryptophan; that span reads PYM. 297 to 298 contributes to the chorismate binding site; sequence GT. Glu-324 lines the Mg(2+) pocket. Phosphoserine is present on residues Ser-390 and Ser-392. Chorismate is bound by residues Tyr-412, Arg-433, 447 to 449, and Gly-449; that span reads GGG. Glu-462 serves as a coordination point for Mg(2+). The residue at position 488 (Ser-488) is a Phosphoserine.

It belongs to the anthranilate synthase component I family. As to quaternary structure, tetramer of two components I and two components II. The cofactor is Mg(2+).

It catalyses the reaction chorismate + L-glutamine = anthranilate + pyruvate + L-glutamate + H(+). The protein operates within amino-acid biosynthesis; L-tryptophan biosynthesis; L-tryptophan from chorismate: step 1/5. In Schizosaccharomyces pombe (strain 972 / ATCC 24843) (Fission yeast), this protein is Probable anthranilate synthase component 1 (trp3).